A 336-amino-acid chain; its full sequence is GTPase Obg (336 aa).

The 159-residue stretch at 1–159 (MKFVDEATLI…KTLKLELKLL (159 aa)) folds into the Obg domain. The OBG-type G domain occupies 160-329 (ADVGLVGLPN…LIEAIFAQLR (170 aa)). Residues 166 to 173 (GLPNAGKS), 191 to 195 (FTTLA), 213 to 216 (DIPG), 283 to 286 (NKMD), and 310 to 312 (SAI) each bind GTP. Residues serine 173 and threonine 193 each coordinate Mg(2+).

This sequence belongs to the TRAFAC class OBG-HflX-like GTPase superfamily. OBG GTPase family. In terms of assembly, monomer. Mg(2+) serves as cofactor.

It is found in the cytoplasm. Functionally, an essential GTPase which binds GTP, GDP and possibly (p)ppGpp with moderate affinity, with high nucleotide exchange rates and a fairly low GTP hydrolysis rate. Plays a role in control of the cell cycle, stress response, ribosome biogenesis and in those bacteria that undergo differentiation, in morphogenesis control. This Desulfatibacillum aliphaticivorans protein is GTPase Obg.